Reading from the N-terminus, the 333-residue chain is MEERIVSAEATELEEQSEQGLRPKRLADYIGQETVKHNLAVFMEAAKMREEALDHVLLYGPPGLGKTTLAAIIAAEMGGELRTTSGPAIERSGDLAAILTALEPGDVLFIDEIHRLNRTVEEVLYPAMEDFCLDIVIGKGPTARSVRLDLPPFTLVGATTRAGMLSSPLRDRFGVMARLEYYKPEELAQIVERSATVFQATLEPSAALELARRSRGTPRIANRLLRRVRDFAQVGGEAAISLERACSALEQLHVDPLGLDHIDDKLLKGMIEKFNGGPVGLETIAATIGEEAATIEEVYEPYLLQIGFIQRTPRGRIATPACYAHYGVEKQNG.

Residues 1-182 form a large ATPase domain (RuvB-L) region; that stretch reads MEERIVSAEA…FGVMARLEYY (182 aa). ATP is bound by residues Leu21, Arg22, Gly63, Lys66, Thr67, Thr68, 129–131, Arg172, Tyr182, and Arg219; that span reads EDF. Residue Thr67 coordinates Mg(2+). A small ATPAse domain (RuvB-S) region spans residues 183-253; sequence KPEELAQIVE…RACSALEQLH (71 aa). The tract at residues 256 to 333 is head domain (RuvB-H); it reads PLGLDHIDDK…AHYGVEKQNG (78 aa). Residues Arg311 and Arg316 each contribute to the DNA site.

The protein belongs to the RuvB family. In terms of assembly, homohexamer. Forms an RuvA(8)-RuvB(12)-Holliday junction (HJ) complex. HJ DNA is sandwiched between 2 RuvA tetramers; dsDNA enters through RuvA and exits via RuvB. An RuvB hexamer assembles on each DNA strand where it exits the tetramer. Each RuvB hexamer is contacted by two RuvA subunits (via domain III) on 2 adjacent RuvB subunits; this complex drives branch migration. In the full resolvosome a probable DNA-RuvA(4)-RuvB(12)-RuvC(2) complex forms which resolves the HJ.

Its subcellular location is the cytoplasm. It carries out the reaction ATP + H2O = ADP + phosphate + H(+). Functionally, the RuvA-RuvB-RuvC complex processes Holliday junction (HJ) DNA during genetic recombination and DNA repair, while the RuvA-RuvB complex plays an important role in the rescue of blocked DNA replication forks via replication fork reversal (RFR). RuvA specifically binds to HJ cruciform DNA, conferring on it an open structure. The RuvB hexamer acts as an ATP-dependent pump, pulling dsDNA into and through the RuvAB complex. RuvB forms 2 homohexamers on either side of HJ DNA bound by 1 or 2 RuvA tetramers; 4 subunits per hexamer contact DNA at a time. Coordinated motions by a converter formed by DNA-disengaged RuvB subunits stimulates ATP hydrolysis and nucleotide exchange. Immobilization of the converter enables RuvB to convert the ATP-contained energy into a lever motion, pulling 2 nucleotides of DNA out of the RuvA tetramer per ATP hydrolyzed, thus driving DNA branch migration. The RuvB motors rotate together with the DNA substrate, which together with the progressing nucleotide cycle form the mechanistic basis for DNA recombination by continuous HJ branch migration. Branch migration allows RuvC to scan DNA until it finds its consensus sequence, where it cleaves and resolves cruciform DNA. In Shouchella clausii (strain KSM-K16) (Alkalihalobacillus clausii), this protein is Holliday junction branch migration complex subunit RuvB.